We begin with the raw amino-acid sequence, 302 residues long: Succinate--CoA ligase [ADP-forming] subunit alpha (302 aa).

CoA contacts are provided by residues 17 to 20, Lys-43, and 96 to 98; these read TGST and ITE. Tyr-159 contacts substrate. The active-site Tele-phosphohistidine intermediate is the His-247.

It belongs to the succinate/malate CoA ligase alpha subunit family. Heterotetramer of two alpha and two beta subunits.

The catalysed reaction is succinate + ATP + CoA = succinyl-CoA + ADP + phosphate. The enzyme catalyses GTP + succinate + CoA = succinyl-CoA + GDP + phosphate. It participates in carbohydrate metabolism; tricarboxylic acid cycle; succinate from succinyl-CoA (ligase route): step 1/1. Its function is as follows. Succinyl-CoA synthetase functions in the citric acid cycle (TCA), coupling the hydrolysis of succinyl-CoA to the synthesis of either ATP or GTP and thus represents the only step of substrate-level phosphorylation in the TCA. The alpha subunit of the enzyme binds the substrates coenzyme A and phosphate, while succinate binding and nucleotide specificity is provided by the beta subunit. This chain is Succinate--CoA ligase [ADP-forming] subunit alpha, found in Staphylococcus epidermidis (strain ATCC 35984 / DSM 28319 / BCRC 17069 / CCUG 31568 / BM 3577 / RP62A).